A 71-amino-acid polypeptide reads, in one-letter code: Large ribosomal subunit protein bL31 (71 aa).

The Zn(2+) site is built by Cys16, Cys18, Cys37, and Cys40.

The protein belongs to the bacterial ribosomal protein bL31 family. Type A subfamily. Part of the 50S ribosomal subunit. Zn(2+) is required as a cofactor.

Binds the 23S rRNA. This Chromohalobacter salexigens (strain ATCC BAA-138 / DSM 3043 / CIP 106854 / NCIMB 13768 / 1H11) protein is Large ribosomal subunit protein bL31.